A 153-amino-acid polypeptide reads, in one-letter code: MVFEGHLVGTGLKVGVVVGRFNEFITSKLLGGALDGLKRHGVEENDIDVAWVPGAFEIPLIAKKMASSGKYDAVITLGTVIRGATTHYDYVCNEVAKGVASLSLQMDIPVIFGVLTTETIEQAIERAGTKAGNKGYESAVAAIEMAHLSKQWA.

5-amino-6-(D-ribitylamino)uracil contacts are provided by residues phenylalanine 21, 55–57, and 79–81; these read AFE and TVI. 84–85 serves as a coordination point for (2S)-2-hydroxy-3-oxobutyl phosphate; that stretch reads AT. Histidine 87 serves as the catalytic Proton donor. Residue phenylalanine 112 coordinates 5-amino-6-(D-ribitylamino)uracil. (2S)-2-hydroxy-3-oxobutyl phosphate is bound at residue arginine 126.

This sequence belongs to the DMRL synthase family. Forms an icosahedral capsid composed of 60 subunits, arranged as a dodecamer of pentamers.

The catalysed reaction is (2S)-2-hydroxy-3-oxobutyl phosphate + 5-amino-6-(D-ribitylamino)uracil = 6,7-dimethyl-8-(1-D-ribityl)lumazine + phosphate + 2 H2O + H(+). It functions in the pathway cofactor biosynthesis; riboflavin biosynthesis; riboflavin from 2-hydroxy-3-oxobutyl phosphate and 5-amino-6-(D-ribitylamino)uracil: step 1/2. Catalyzes the formation of 6,7-dimethyl-8-ribityllumazine by condensation of 5-amino-6-(D-ribitylamino)uracil with 3,4-dihydroxy-2-butanone 4-phosphate. This is the penultimate step in the biosynthesis of riboflavin. The sequence is that of 6,7-dimethyl-8-ribityllumazine synthase from Bacillus cereus (strain G9842).